A 474-amino-acid polypeptide reads, in one-letter code: Serine--tRNA ligase (474 aa).

278–280 (TAE) is a binding site for L-serine. An ATP-binding site is contributed by 309-311 (RSE). E332 contributes to the L-serine binding site. Residue 396-399 (EISS) participates in ATP binding. S432 serves as a coordination point for L-serine.

The protein belongs to the class-II aminoacyl-tRNA synthetase family. Type-1 seryl-tRNA synthetase subfamily. As to quaternary structure, homodimer. The tRNA molecule binds across the dimer.

Its subcellular location is the cytoplasm. The catalysed reaction is tRNA(Ser) + L-serine + ATP = L-seryl-tRNA(Ser) + AMP + diphosphate + H(+). It catalyses the reaction tRNA(Sec) + L-serine + ATP = L-seryl-tRNA(Sec) + AMP + diphosphate + H(+). The protein operates within aminoacyl-tRNA biosynthesis; selenocysteinyl-tRNA(Sec) biosynthesis; L-seryl-tRNA(Sec) from L-serine and tRNA(Sec): step 1/1. In terms of biological role, catalyzes the attachment of serine to tRNA(Ser). Is also able to aminoacylate tRNA(Sec) with serine, to form the misacylated tRNA L-seryl-tRNA(Sec), which will be further converted into selenocysteinyl-tRNA(Sec). The chain is Serine--tRNA ligase from Caulobacter sp. (strain K31).